Here is a 379-residue protein sequence, read N- to C-terminus: Botryococcene C-methyltransferase (379 aa).

The chain crosses the membrane as a helical span at residues 17-37 (LLTWKGAAGLAAAVALGYIII).

It belongs to the class I-like SAM-binding methyltransferase superfamily. Erg6/SMT family.

It localises to the microsome membrane. It carries out the reaction C30 botryococcene + 2 S-adenosyl-L-methionine = 3,20-dimethyl-1,2,21,22-tetradehydro-2,3,20,21-tetrahydrobotryococcene + 2 S-adenosyl-L-homocysteine + 2 H(+). Functionally, converts botryococcene to mono- and dimethyl derivatives, but not to tri- and tetramethylated products. Unable to methylate cycloartenol, zymosterol or lanosterol, but can also use squalene as substrate. Methylates both C-3 and C22 positions, but only C-3 position in monomethylated squalenes. In contrast, monomethylated botryococcene occured mainly at the C-20 position yielding showacene, but also at the C-3 position yielding isoshowacene. The polypeptide is Botryococcene C-methyltransferase (TMT-3) (Botryococcus braunii (Green alga)).